The following is a 212-amino-acid chain: Deoxyribose-phosphate aldolase (212 aa).

Asp89 acts as the Proton donor/acceptor in catalysis. The active-site Schiff-base intermediate with acetaldehyde is the Lys151. Lys180 functions as the Proton donor/acceptor in the catalytic mechanism.

It belongs to the DeoC/FbaB aldolase family. DeoC type 1 subfamily.

The protein localises to the cytoplasm. It carries out the reaction 2-deoxy-D-ribose 5-phosphate = D-glyceraldehyde 3-phosphate + acetaldehyde. It participates in carbohydrate degradation; 2-deoxy-D-ribose 1-phosphate degradation; D-glyceraldehyde 3-phosphate and acetaldehyde from 2-deoxy-alpha-D-ribose 1-phosphate: step 2/2. In terms of biological role, catalyzes a reversible aldol reaction between acetaldehyde and D-glyceraldehyde 3-phosphate to generate 2-deoxy-D-ribose 5-phosphate. This chain is Deoxyribose-phosphate aldolase, found in Clostridium botulinum (strain Okra / Type B1).